Reading from the N-terminus, the 779-residue chain is Protein phosphatase 1 regulatory subunit 21 (779 aa).

2 coiled-coil regions span residues 2-212 (AATA…QAAL) and 556-614 (TESR…ETVQ). 2 disordered regions span residues 85–105 (ETRG…SQEQ) and 612–637 (TVQE…QREP). Over residues 96–105 (ESSSQLSQEQ) the composition is skewed to low complexity. The segment covering 624–637 (EQKEETTEKSQREP) has biased composition (basic and acidic residues). Residues 693–739 (AECRALAKRLSLAEKSKESLTEELKLASQSISRLQDELMTTKRSYED) adopt a coiled-coil conformation. The interval 760–779 (EEIDTLKMTSKGNSKKNKTR) is disordered.

Component of the FERRY complex.

The protein localises to the early endosome. Functionally, component of the FERRY complex (Five-subunit Endosomal Rab5 and RNA/ribosome intermediary). The FERRY complex directly interacts with mRNAs and RAB5A, and functions as a RAB5A effector involved in the localization and the distribution of specific mRNAs most likely by mediating their endosomal transport. The complex recruits mRNAs and ribosomes to early endosomes through direct mRNA-interaction. Putative regulator of protein phosphatase 1 (PP1) activity. May play a role in the endosomal sorting process or in endosome maturation pathway. The chain is Protein phosphatase 1 regulatory subunit 21 (PPP1R21) from Gallus gallus (Chicken).